The primary structure comprises 165 residues: Protoporphyrinogen IX oxidase (165 aa).

The next 4 membrane-spanning stretches (helical) occupy residues 26-46, 77-97, 99-119, and 145-165; these read LHVISVLAWMAGLFYLPRLFV, AMIATWIFGLLLVFTPGIVDW, MLWPWTKAACVLAMTGFHMWL, and PTLLMLVIVFSAVAKWNYWGF. His-27 is a binding site for heme. Position 105 (Lys-105) interacts with heme.

The protein belongs to the HemJ family. As to quaternary structure, homodimer. Heme b is required as a cofactor.

The protein localises to the cell membrane. The catalysed reaction is protoporphyrinogen IX + 3 A = protoporphyrin IX + 3 AH2. It participates in porphyrin-containing compound metabolism; protoporphyrin-IX biosynthesis; protoporphyrin-IX from protoporphyrinogen-IX: step 1/1. Functionally, catalyzes the oxidation of protoporphyrinogen IX to protoporphyrin IX. Is involved in the biosynthesis of tetrapyrrole molecules like heme and chlorophyll. Does not use oxygen or artificial electron acceptors such as menadione or benzoquinone. This is Protoporphyrinogen IX oxidase from Cereibacter sphaeroides (strain ATCC 17023 / DSM 158 / JCM 6121 / CCUG 31486 / LMG 2827 / NBRC 12203 / NCIMB 8253 / ATH 2.4.1.) (Rhodobacter sphaeroides).